The chain runs to 1216 residues: AF4/FMR2 family member 1 (1216 aa).

Disordered regions lie at residues 1–52, 68–104, 116–139, 152–217, 244–275, and 352–728; these read MAAH…KGDE, KEFLSSKSHPHRLDGSEDRPGKPRYPLGHDRGNGAAS, IHTSAPGSRPVGNISHSPKMAQPR, PRLT…VSSK, AVTSLGSAPPQPPCQTFPPPPLPSKSAAMQQK, and SWPP…RTSG. Composition is skewed to basic and acidic residues over residues 9-35 and 78-99; these read NEDRNLLRIREKERRNQEAHQEKEAFP and HRLDGSEDRPGKPRYPLGHDRG. Residues 166–182 are compositionally biased toward basic and acidic residues; the sequence is RKCDRRAEGDSAPERKL. Residues Ser183, Ser191, and Ser197 each carry the phosphoserine modification. The span at 207–217 shows a compositional bias: low complexity; it reads SKAHSSGVSSK. Residues 252–266 are compositionally biased toward pro residues; the sequence is PPQPPCQTFPPPPLP. Positions 383–406 are enriched in polar residues; sequence PATQSQKQYDTPSKTHPNPQQGTS. A compositionally biased stretch (acidic residues) spans 408 to 424; that stretch reads LEDDLQLSDSEDSDTEQ. Pro residues predominate over residues 429-438; it reads PPSPPAPPSA. Positions 457–484 are enriched in acidic residues; it reads ESSESDSSSDSESESSSSDSEEEEENEP. Lys682 bears the N6-acetyllysine mark. Residues 710 to 728 show a composition bias toward low complexity; sequence SQGPSHSSRGSSGSVRTSG. A phosphoserine mark is found at Ser755 and Ser760. 2 disordered regions span residues 777 to 969 and 1094 to 1125; these read RIPQ…RQQA and APSPCTARSTGVPSPLSPMPSPASSVGSQSSA. Basic and acidic residues predominate over residues 789 to 808; it reads RKAEDKQLSAGKKQDSETKS. Composition is skewed to low complexity over residues 824–846, 867–886, 902–915, and 1115–1125; these read KKSTVTRDTNWISRRASSSSSHT, PPASASSVSSSSSSQKPSRP, PPRSASSTKSSSTD, and PASSVGSQSSA.

It belongs to the AF4 family. In terms of assembly, component of the super elongation complex (SEC), at least composed of EAF1, EAF2, CDK9, MLLT3/AF9, AFF (AFF1 or AFF4), the P-TEFb complex and ELL (ELL, ELL2 or ELL3).

The protein localises to the nucleus. The sequence is that of AF4/FMR2 family member 1 (Aff1) from Mus musculus (Mouse).